The sequence spans 195 residues: Protein aq_1444 (195 aa).

The region spanning 1–191 (MDIRELVHLG…EKEPFGEVER (191 aa)) is the AMMECR1 domain.

The protein is Protein aq_1444 of Aquifex aeolicus (strain VF5).